Consider the following 489-residue polypeptide: MSIWQRVSFTHRFSQLPSAFYTLVEPQPLDNTRWVAWNGEFAQQFGLPAAQNDELLAVFSGQSEFEPFRPLAMKYAGHQFGVYNPDLGDGRGLLLAEIEHQNGTWFDIHLKGAGLTPYSRMGDGRAVLRSTIREYLCSEAMAGLGIPTTRALGMVVSDTPVYREKTEFGAMLIRMAETHVRFGHFEHLFYTNQLAEQKLLADKVIEWHFADCASAEKPYAAMFGEIVQKTADMIAYWQAYGFAHGVMNTDNMSILGQTFDYGPFGFLDDYEPGYICNHSDYQGRYAFEQQPRIALWNLSALAHALSPLVEREDLEQALSQFEGRLSQQFSRLMRSKLGLKTKIAEDGRLFESMFELLNQNHTDYTRFFRALSNLDKQPAQEVIDLFIDREAAQAWLDLYLARCELEVDEIGEPISAEQRSEQMRQTNPKYILRNYLAQLAIDKAEEGDFSEVHRLAEILRHPYDSQPEFEAYAKLPPEWGKKMEISCSS.

Residues glycine 88, glycine 90, arginine 91, lysine 111, aspartate 123, glycine 124, arginine 174, and arginine 181 each coordinate ATP. The active-site Proton acceptor is the aspartate 250. Mg(2+)-binding residues include asparagine 251 and aspartate 260. Aspartate 260 serves as a coordination point for ATP.

It belongs to the SELO family. The cofactor is Mg(2+). Mn(2+) serves as cofactor.

It catalyses the reaction L-seryl-[protein] + ATP = 3-O-(5'-adenylyl)-L-seryl-[protein] + diphosphate. It carries out the reaction L-threonyl-[protein] + ATP = 3-O-(5'-adenylyl)-L-threonyl-[protein] + diphosphate. The catalysed reaction is L-tyrosyl-[protein] + ATP = O-(5'-adenylyl)-L-tyrosyl-[protein] + diphosphate. The enzyme catalyses L-histidyl-[protein] + UTP = N(tele)-(5'-uridylyl)-L-histidyl-[protein] + diphosphate. It catalyses the reaction L-seryl-[protein] + UTP = O-(5'-uridylyl)-L-seryl-[protein] + diphosphate. It carries out the reaction L-tyrosyl-[protein] + UTP = O-(5'-uridylyl)-L-tyrosyl-[protein] + diphosphate. Functionally, nucleotidyltransferase involved in the post-translational modification of proteins. It can catalyze the addition of adenosine monophosphate (AMP) or uridine monophosphate (UMP) to a protein, resulting in modifications known as AMPylation and UMPylation. The polypeptide is Protein nucleotidyltransferase YdiU (Vibrio parahaemolyticus serotype O3:K6 (strain RIMD 2210633)).